The following is a 267-amino-acid chain: Acetyl-coenzyme A carboxylase carboxyl transferase subunit beta 1 (267 aa).

Residues 9 to 267 enclose the CoA carboxyltransferase N-terminal domain; it reads TWQACPKCGR…NYGIGRSAHG (259 aa). The Zn(2+) site is built by Cys-13, Cys-16, Cys-31, and Cys-34. The C4-type zinc finger occupies 13 to 34; the sequence is CPKCGRHVHQRQWGTYQQCPYC.

Belongs to the AccD/PCCB family. Acetyl-CoA carboxylase is a heterohexamer composed of biotin carboxyl carrier protein (AccB), biotin carboxylase (AccC) and two subunits each of ACCase subunit alpha (AccA) and ACCase subunit beta (AccD). Zn(2+) serves as cofactor.

It is found in the cytoplasm. The catalysed reaction is N(6)-carboxybiotinyl-L-lysyl-[protein] + acetyl-CoA = N(6)-biotinyl-L-lysyl-[protein] + malonyl-CoA. It participates in lipid metabolism; malonyl-CoA biosynthesis; malonyl-CoA from acetyl-CoA: step 1/1. In terms of biological role, component of the acetyl coenzyme A carboxylase (ACC) complex. Biotin carboxylase (BC) catalyzes the carboxylation of biotin on its carrier protein (BCCP) and then the CO(2) group is transferred by the transcarboxylase to acetyl-CoA to form malonyl-CoA. This chain is Acetyl-coenzyme A carboxylase carboxyl transferase subunit beta 1, found in Lactiplantibacillus plantarum (strain ATCC BAA-793 / NCIMB 8826 / WCFS1) (Lactobacillus plantarum).